The chain runs to 348 residues: RNA 3'-terminal phosphate cyclase (348 aa).

ATP-binding positions include glutamine 107 and 290–294 (HLADQ). Histidine 316 functions as the Tele-AMP-histidine intermediate in the catalytic mechanism.

It belongs to the RNA 3'-terminal cyclase family. Type 1 subfamily.

It is found in the cytoplasm. The enzyme catalyses a 3'-end 3'-phospho-ribonucleotide-RNA + ATP = a 3'-end 2',3'-cyclophospho-ribonucleotide-RNA + AMP + diphosphate. Functionally, catalyzes the conversion of 3'-phosphate to a 2',3'-cyclic phosphodiester at the end of RNA. The mechanism of action of the enzyme occurs in 3 steps: (A) adenylation of the enzyme by ATP; (B) transfer of adenylate to an RNA-N3'P to produce RNA-N3'PP5'A; (C) and attack of the adjacent 2'-hydroxyl on the 3'-phosphorus in the diester linkage to produce the cyclic end product. The biological role of this enzyme is unknown but it is likely to function in some aspects of cellular RNA processing. This chain is RNA 3'-terminal phosphate cyclase, found in Nostoc punctiforme (strain ATCC 29133 / PCC 73102).